Here is a 107-residue protein sequence, read N- to C-terminus: Integration host factor subunit beta (107 aa).

Positions 76–107 (FVPHFKPGKELRERVDGRAGEPLKADDPDDDR) are disordered. Basic and acidic residues predominate over residues 82–101 (PGKELRERVDGRAGEPLKAD).

This sequence belongs to the bacterial histone-like protein family. In terms of assembly, heterodimer of an alpha and a beta chain.

This protein is one of the two subunits of integration host factor, a specific DNA-binding protein that functions in genetic recombination as well as in transcriptional and translational control. This is Integration host factor subunit beta from Burkholderia cenocepacia (strain HI2424).